Here is a 74-residue protein sequence, read N- to C-terminus: UPF0346 protein LCA_0996 (74 aa).

Belongs to the UPF0346 family.

This is UPF0346 protein LCA_0996 from Latilactobacillus sakei subsp. sakei (strain 23K) (Lactobacillus sakei subsp. sakei).